A 507-amino-acid polypeptide reads, in one-letter code: Maturase K (507 aa).

Belongs to the intron maturase 2 family. MatK subfamily.

It is found in the plastid. The protein localises to the chloroplast. Functionally, usually encoded in the trnK tRNA gene intron. Probably assists in splicing its own and other chloroplast group II introns. The polypeptide is Maturase K (Fagopyrum tataricum (Tartarian buckwheat)).